A 41-amino-acid polypeptide reads, in one-letter code: MKIKNSLKALKARHRDCQLVRRKGRVYIINKTAPRFKARQG.

Belongs to the bacterial ribosomal protein bL36 family.

In Brucella abortus (strain S19), this protein is Large ribosomal subunit protein bL36.